The sequence spans 250 residues: 2,3-bisphosphoglycerate-dependent phosphoglycerate mutase (250 aa).

Residues 8–15 (RHGESKWN), 21–22 (TG), Arg60, 87–90 (ERHY), Lys98, 114–115 (RR), and 183–184 (GN) contribute to the substrate site. His9 acts as the Tele-phosphohistidine intermediate in catalysis. The active-site Proton donor/acceptor is the Glu87.

The protein belongs to the phosphoglycerate mutase family. BPG-dependent PGAM subfamily.

The enzyme catalyses (2R)-2-phosphoglycerate = (2R)-3-phosphoglycerate. It functions in the pathway carbohydrate degradation; glycolysis; pyruvate from D-glyceraldehyde 3-phosphate: step 3/5. Its function is as follows. Catalyzes the interconversion of 2-phosphoglycerate and 3-phosphoglycerate. The chain is 2,3-bisphosphoglycerate-dependent phosphoglycerate mutase from Borrelia recurrentis (strain A1).